The chain runs to 768 residues: GPI inositol-deacylase (768 aa).

A helical transmembrane segment spans residues 35–55 (FLSRLFCALAVLFSYSIYQSF). Residue serine 206 is part of the active site. Residues asparagine 291, asparagine 336, asparagine 374, and asparagine 448 are each glycosylated (N-linked (GlcNAc...) asparagine). The next 6 membrane-spanning stretches (helical) occupy residues 604–624 (MPIC…LPDF), 642–662 (LVGI…FHLI), 663–683 (STCA…VAIW), 700–720 (NFYY…GGTI), 725–745 (VCLK…FSVG), and 748–768 (WTWI…ASII).

This sequence belongs to the GPI inositol-deacylase family.

The protein resides in the endoplasmic reticulum membrane. Its function is as follows. Involved in inositol deacylation of GPI-anchored proteins which plays important roles in the quality control and ER-associated degradation of GPI-anchored proteins. The polypeptide is GPI inositol-deacylase (BST1) (Cryptococcus neoformans var. neoformans serotype D (strain B-3501A) (Filobasidiella neoformans)).